We begin with the raw amino-acid sequence, 120 residues long: Ribonuclease P protein component (120 aa).

This sequence belongs to the RnpA family. As to quaternary structure, consists of a catalytic RNA component (M1 or rnpB) and a protein subunit.

The enzyme catalyses Endonucleolytic cleavage of RNA, removing 5'-extranucleotides from tRNA precursor.. Its function is as follows. RNaseP catalyzes the removal of the 5'-leader sequence from pre-tRNA to produce the mature 5'-terminus. It can also cleave other RNA substrates such as 4.5S RNA. The protein component plays an auxiliary but essential role in vivo by binding to the 5'-leader sequence and broadening the substrate specificity of the ribozyme. The protein is Ribonuclease P protein component of Dehalococcoides mccartyi (strain CBDB1).